Here is a 237-residue protein sequence, read N- to C-terminus: Phosphoribosylaminoimidazole-succinocarboxamide synthase (237 aa).

Belongs to the SAICAR synthetase family.

The enzyme catalyses 5-amino-1-(5-phospho-D-ribosyl)imidazole-4-carboxylate + L-aspartate + ATP = (2S)-2-[5-amino-1-(5-phospho-beta-D-ribosyl)imidazole-4-carboxamido]succinate + ADP + phosphate + 2 H(+). Its pathway is purine metabolism; IMP biosynthesis via de novo pathway; 5-amino-1-(5-phospho-D-ribosyl)imidazole-4-carboxamide from 5-amino-1-(5-phospho-D-ribosyl)imidazole-4-carboxylate: step 1/2. The chain is Phosphoribosylaminoimidazole-succinocarboxamide synthase from Citrobacter koseri (strain ATCC BAA-895 / CDC 4225-83 / SGSC4696).